The chain runs to 497 residues: L-asparagine permease (497 aa).

12 consecutive transmembrane segments (helical) span residues 34–54, 58–78, 109–129, 146–166, 171–191, 219–239, 264–284, 298–318, 353–373, 378–398, 422–442, and 448–468; these read QVQM…GAGA, MAGP…FFIL, VAGW…ITAV, VFAL…VKWF, FWFA…GTIF, LLPA…IELV, IGLF…WNAY, LGVP…ALSS, YAGI…NYLV, FEIV…FIMV, APFT…LMAF, and TYTI…WFGV.

The protein belongs to the amino acid-polyamine-organocation (APC) superfamily. Amino acid transporter (AAT) (TC 2.A.3.1) family.

The protein localises to the cell inner membrane. This is L-asparagine permease (ansP) from Salmonella typhimurium (strain LT2 / SGSC1412 / ATCC 700720).